The primary structure comprises 472 residues: Protein hedgehog (472 aa).

C84 carries N-palmitoyl cysteine lipidation. Ca(2+) contacts are provided by E149, D154, E185, D188, and D190. A lipid anchor (Cholesterol glycine ester) is attached at G256.

This sequence belongs to the hedgehog family. Interacts with shf. In terms of processing, the C-terminal part of the hedgehog protein precursor displays an autoproteolysis activity that results in the cleavage of the full-length protein into two parts (N-product and C-product). In addition, the C-terminal part displays a cholesterol transferase activity that results by the covalent attachment of a cholesterol moiety to the C-terminal of the newly generated N-product. The N-product is the active species in both local and long-range signaling, whereas the C-product has no signaling activity. Post-translationally, cholesterylation is required for N-product targeting to lipid rafts and multimerization. N-palmitoylation by Rasp of the hedgehog N-product, within the secretory pathway, is required for the embryonic and larval patterning activities of the hedgehog signal.

Its subcellular location is the nucleus. It localises to the cytoplasm. It is found in the cell membrane. The catalysed reaction is glycyl-L-cysteinyl-[protein] + cholesterol + H(+) = [protein]-C-terminal glycyl cholesterol ester + N-terminal L-cysteinyl-[protein]. Its function is as follows. The C-terminal part of the hedgehog protein precursor displays an autoproteolysis activity that results in the cleavage of the full-length protein into two parts (N-product and C-product). In addition, the C-terminal part displays a cholesterol transferase activity that results by the covalent attachment of a cholesterol moiety to the C-terminal of the newly generated N-product. Once cleaved, the C-product has no signaling activity and diffuses from the cell. In terms of biological role, the dually lipidated hedgehog protein N-product is a morphogen which is essential for a variety of patterning events during development. Establishes the anterior-posterior axis of the embryonic segments and patterns the larval imaginal disks. Binds to the patched (ptc) receptor, which functions in association with smoothened (smo), to activate the transcription of target genes wingless (wg), decapentaplegic (dpp) and ptc. In the absence of hh, ptc represses the constitutive signaling activity of smo through fused (fu). Essential component of a signaling pathway which regulates the Duox-dependent gut immune response to bacterial uracil; required to activate Cad99C-dependent endosome formation, norpA-dependent Ca2+ mobilization and p38 MAPK, which are essential steps in the Duox-dependent production of reactive oxygen species (ROS) in response to intestinal bacterial infection. During photoreceptor differentiation, it up-regulates transcription of Ubr3, which in turn promotes the hh-signaling pathway by mediating the ubiquitination and degradation of cos. This chain is Protein hedgehog, found in Drosophila ananassae (Fruit fly).